A 594-amino-acid polypeptide reads, in one-letter code: Zinc finger protein 37 (594 aa).

A disordered region spans residues 1-253; sequence MATSEPAESD…KPEKAPGSGK (253 aa). The residue at position 3 (T3) is a Phosphothreonine. In terms of domain architecture, KRAB spans 3–74; that stretch reads TSEPAESDAV…GKKASPSSLK (72 aa). S9 is subject to Phosphoserine. Residues 10–33 are compositionally biased toward basic and acidic residues; that stretch reads DAVRAKEWEQLEPVQRDVYKDTKL. The segment covering 34–46 has biased composition (polar residues); sequence ENCSNPASMGNQD. A compositionally biased stretch (basic and acidic residues) spans 89 to 111; sequence QQDDEHREEKQKSQSKLTKEVTL. The segment covering 145 to 158 has biased composition (polar residues); it reads KSSSRGKNSNQNSD. 2 stretches are compositionally biased toward basic and acidic residues: residues 159–172 and 181–234; these read SLKKKPDTANDHRK and VNKD…TGEK. C2H2-type zinc fingers lie at residues 255–277, 283–305, 311–324, 339–361, 367–389, 395–417, 423–445, 451–473, 479–501, 507–529, 535–557, and 563–585; these read YECNHCGKVLSHKQGLLDHQRTH, YECNECGIAFSQKSHLVVHQRTH, YECEQCGKAHGHKH, YKCNECGKTFRHSSNLMQHLRSH, YECKECGKSFRYNSSLTEHVRTH, YECNECGKAFKYGSSLTKHMRIH, FECNECGKTFSKKSHLVIHQRTH, YKCDECGKAFGHSSSLTYHMRTH, FECNQCGKAFKQIEGLTQHQRVH, YECVECGKAFSQKSHLIVHQRTH, FECYECGKAFNAKSQLVIHQRSH, and YECIECGKAFKQNASLTKHMKIH.

Belongs to the krueppel C2H2-type zinc-finger protein family. As to expression, expressed in testis and brain.

Its subcellular location is the nucleus. Functionally, may have a role in regulating spermiogenesis. The sequence is that of Zinc finger protein 37 (Zfp37) from Mus musculus (Mouse).